Consider the following 296-residue polypeptide: Tyrosine recombinase XerC (296 aa).

The Core-binding (CB) domain occupies 1–84 (MNKIQESFLY…TLRSFYEFWM (84 aa)). In terms of domain architecture, Tyr recombinase spans 105–286 (YLPHFFYEEE…SNQQLRKVYL (182 aa)). Active-site residues include Arg145, Lys169, His238, Arg241, and His264. The active-site O-(3'-phospho-DNA)-tyrosine intermediate is Tyr273.

Belongs to the 'phage' integrase family. XerC subfamily. In terms of assembly, forms a cyclic heterotetrameric complex composed of two molecules of XerC and two molecules of XerD.

It is found in the cytoplasm. In terms of biological role, site-specific tyrosine recombinase, which acts by catalyzing the cutting and rejoining of the recombining DNA molecules. The XerC-XerD complex is essential to convert dimers of the bacterial chromosome into monomers to permit their segregation at cell division. It also contributes to the segregational stability of plasmids. This Staphylococcus carnosus (strain TM300) protein is Tyrosine recombinase XerC.